A 2431-amino-acid polypeptide reads, in one-letter code: Reducing polyketide synthase rads1 (2431 aa).

Residues 10–440 (RAPIAIIGLA…GTNAHIVLER (431 aa)) enclose the Ketosynthase family 3 (KS3) domain. Residues Cys-184, His-319, and His-363 each act as for beta-ketoacyl synthase activity in the active site. The malonyl-CoA:ACP transacylase (MAT) domain stretch occupies residues 558–895 (FVFTGQGAQW…NLAAELFRRG (338 aa)). An N-terminal hotdog fold region spans residues 944–1080 (KSILGAELPS…GLISIAYEDT (137 aa)). The region spanning 944 to 1267 (KSILGAELPS…LAELEVDDAA (324 aa)) is the PKS/mFAS DH domain. A dehydratase (DH) domain region spans residues 946 to 1264 (ILGAELPSMD…DFRLAELEVD (319 aa)). The active-site Proton acceptor; for dehydratase activity is the His-976. The interval 1108 to 1267 (PETCSKERFY…LAELEVDDAA (160 aa)) is C-terminal hotdog fold. Residue Asp-1174 is the Proton donor; for dehydratase activity of the active site. An enoyl reductase (ER) domain region spans residues 1705–2023 (GLLNTLHFVP…QGKHLGKMIL (319 aa)). The Phosphocysteine intermediate role is filled by Cys-1822. The ketoreductase (KR) domain stretch occupies residues 2048–2228 (ATYLIVGGLG…VSVNLGIMRD (181 aa)). A Carrier domain is found at 2346–2423 (VAAAIITEAL…TFAVQIAKKS (78 aa)). Residue Ser-2383 is modified to O-(pantetheine 4'-phosphoryl)serine.

The protein operates within secondary metabolite biosynthesis. Its function is as follows. Reducing polyketide synthase; part of the gene cluster that mediates the biosynthesis of radicicol, a resorcylic acid lactone (RAL) that irreversibly inhibits the HSP90 molecular chaperone, an important target for cancer chemotherapy. The cluster encodes only two apparent post-PKS enzymes, a cytochrome P450 monooxygenase (radP) and a non-heme halogenase (radH) that introduce the epoxide and the chlorine, respectively. If this cluster includes all the genes required for radicicol biosynthesis, the remaining structural features of radicicol are presumably generated by the PKSs rads1 and rads2. The C-2' ketone could arise if the R-PKS rads1 and NR-PKS rads2 each carry out four iterations, in contrast to the five iteration-three iteration split for the hypothemycin PKSs. The origin of the cis 5',6' double bond is not known. The radicicol R-PKS radS1 ER domain may catalyze either double bond isomerization or reduction in the third iteration. In Floropilus chiversii (Chaetomium chiversii), this protein is Reducing polyketide synthase rads1.